The following is a 354-amino-acid chain: Uroporphyrinogen decarboxylase (354 aa).

Residues 27–31 (RQAGR), D77, Y154, S209, and H327 contribute to the substrate site.

This sequence belongs to the uroporphyrinogen decarboxylase family. As to quaternary structure, homodimer.

It localises to the cytoplasm. It catalyses the reaction uroporphyrinogen III + 4 H(+) = coproporphyrinogen III + 4 CO2. Its pathway is porphyrin-containing compound metabolism; protoporphyrin-IX biosynthesis; coproporphyrinogen-III from 5-aminolevulinate: step 4/4. Its function is as follows. Catalyzes the decarboxylation of four acetate groups of uroporphyrinogen-III to yield coproporphyrinogen-III. This chain is Uroporphyrinogen decarboxylase, found in Shewanella loihica (strain ATCC BAA-1088 / PV-4).